The chain runs to 279 residues: Large ribosomal subunit protein uL2 (279 aa).

2 disordered regions span residues 31–61 and 222–279; these read KSLL…HKRH and GMAM…RNAK. Residues 49–61 show a composition bias toward basic residues; it reads KTSRHRGGGHKRH. Residues 232–242 show a composition bias toward gly residues; that stretch reads MGGGEGKSKSG. Basic residues predominate over residues 259-268; that stretch reads LKTRNRKKAS.

Belongs to the universal ribosomal protein uL2 family. As to quaternary structure, part of the 50S ribosomal subunit. Forms a bridge to the 30S subunit in the 70S ribosome.

Its function is as follows. One of the primary rRNA binding proteins. Required for association of the 30S and 50S subunits to form the 70S ribosome, for tRNA binding and peptide bond formation. It has been suggested to have peptidyltransferase activity; this is somewhat controversial. Makes several contacts with the 16S rRNA in the 70S ribosome. This chain is Large ribosomal subunit protein uL2, found in Chlorobium chlorochromatii (strain CaD3).